A 133-amino-acid polypeptide reads, in one-letter code: Large ribosomal subunit protein uL15 (133 aa).

The interval 1–64 (MGLENLKPAK…QPLQRRLPKI (64 aa)) is disordered.

Belongs to the universal ribosomal protein uL15 family. In terms of assembly, part of the 50S ribosomal subunit.

Its function is as follows. Binds to the 23S rRNA. The chain is Large ribosomal subunit protein uL15 from Helicobacter pylori (strain Shi470).